A 963-amino-acid polypeptide reads, in one-letter code: MLPYNVRNAGGGSVGGILRRTGQGSGTGSTILGNGNSPGALGAGKVSSSLENHRQPPLELLVFGYACKIFRDDEKAREMDHGKQLIPWMGDVNLKIDRYDVRGALCELAPHEAPPGGYGNRLEYLSAEEQRAEQLCEEERYLFLYNNEEELRLRQEEDLKRLQQETSGGCFSQVGFQYDGQSAASTSIGGSSTATSQLSPNSEESELPFVLPYTLMMAPPLDMQLPETMKQHAIIEKTARFIATQGAQMEILIKAKQANNTQFDFLTQGGHLQPYYRHLLAAIKAAKFPPAPQTPLDQQNTDKEAPSADDHSEEVAGGRRNPNQVVITVPTIKYKPSANCAYTQLISKIKGVPLQAVLQEDESSNPGNSQHSGGTASPALSCRSEGHNSQGGEFTPVLLQYNGSTFTHEEESSNREQQDDNDVNGGEPPQVELLKNTSALALAQNYSSESEEEEDQVQPEKEEEKKPEPVLTFPVPKDSLRHIIDKTATYVIKNGRQFEETLRTKSVDRFSFLLPANEYYPYYLYKVTGDVDAASKEEKTRKAAAVAAALMSKKGLSFGGAAAAVSGSNLDKAPVSFSIRARDDQCPLQHTLPQEASDEETSSNAAGVEHVRPGMPDSVQRAIKQVETQLLARTAGQKGNITASPSCSSPQKEQRQAEERVKDKLAQIAREKLNGMISREKQLQLERKRKALAFLNQIKGEGAIVGSAVPVVGPNPPESAAGAATADSGDESGDSVRSIPITYFGPDDDDEVGEQRPEMRLIGSTQKDEEDDDEEDGGDLEKYNLLNDDSTNTFTSKPVLPPTAAPPPAAVLLSDDDDVQLVATTSTRSSSSRHLKTHRRSRSRSKNVRSSDSSPSSRESSRRRRQKSSRLSREPSSNPPRKSQHSSTQRKKTPKKRRRSKSRSRSKSIRRSRSISILRNNRRSRSRSPSCRNAEQRRQQDRRRTPTKKSHKRHKRRRRSSSP.

One copy of the SURP motif 1 repeat lies at 234-276; it reads IIEKTARFIATQGAQMEILIKAKQANNTQFDFLTQGGHLQPYY. Disordered stretches follow at residues 290–322 and 360–430; these read PAPQ…RRNP and EDES…EPPQ. Over residues 300-317 the composition is skewed to basic and acidic residues; sequence NTDKEAPSADDHSEEVAG. Residues 364–375 are compositionally biased toward polar residues; the sequence is SNPGNSQHSGGT. Over residues 407–418 the composition is skewed to basic and acidic residues; the sequence is THEEESSNREQQ. A phosphoserine mark is found at Ser-438, Ser-447, Ser-448, and Ser-450. The segment at 445–470 is disordered; that stretch reads NYSSESEEEEDQVQPEKEEEKKPEPV. Basic and acidic residues predominate over residues 458–468; it reads QPEKEEEKKPE. One copy of the SURP motif 2 repeat lies at 483–523; sequence IIDKTATYVIKNGRQFEETLRTKSVDRFSFLLPANEYYPYY. Disordered stretches follow at residues 593-613, 634-662, and 716-963; these read PQEA…HVRP, TAGQ…ERVK, and PPES…SSSP. A compositionally biased stretch (polar residues) spans 637-651; it reads QKGNITASPSCSSPQ. Phosphoserine is present on Ser-649. The span at 652-662 shows a compositional bias: basic and acidic residues; it reads KEQRQAEERVK. Residues 718–727 show a composition bias toward low complexity; that stretch reads ESAAGAATAD. A compositionally biased stretch (acidic residues) spans 768–778; that stretch reads DEEDDDEEDGG. Positions 787–796 are enriched in polar residues; it reads NDDSTNTFTS. Residues 799–809 are compositionally biased toward pro residues; the sequence is VLPPTAAPPPA. Low complexity predominate over residues 820-830; the sequence is QLVATTSTRSS. The segment covering 831–847 has biased composition (basic residues); it reads SSRHLKTHRRSRSRSKN. Over residues 848 to 858 the composition is skewed to low complexity; it reads VRSSDSSPSSR. 2 stretches are compositionally biased toward basic residues: residues 861 to 870 and 882 to 913; these read SRRRRQKSSR and KSQH…RRSR. Phosphoserine occurs at positions 912, 914, and 916. The segment covering 934-944 has biased composition (basic and acidic residues); the sequence is AEQRRQQDRRR. Positions 945 to 963 are enriched in basic residues; sequence TPTKKSHKRHKRRRRSSSP.

It is found in the nucleus speckle. Its function is as follows. Regulator of pre-mRNA splicing (and, possibly, of other RNA processing events). Regulates its own expression at the level of RNA processing. The chain is Protein suppressor of white apricot (su(w[a])) from Drosophila melanogaster (Fruit fly).